The chain runs to 200 residues: Anthranilate synthase component 2 (200 aa).

A Glutamine amidotransferase type-1 domain is found at 3 to 196 (NILLLDNIDS…IHWASLKYIT (194 aa)). 57–59 (GPS) provides a ligand contact to L-glutamine. C84 (nucleophile; for GATase activity) is an active-site residue. Residues Q88 and 134–135 (SL) each bind L-glutamine. Active-site for GATase activity residues include H170 and E172.

As to quaternary structure, heterotetramer consisting of two non-identical subunits: a beta subunit (TrpG) and a large alpha subunit (TrpE).

The enzyme catalyses chorismate + L-glutamine = anthranilate + pyruvate + L-glutamate + H(+). It functions in the pathway amino-acid biosynthesis; L-tryptophan biosynthesis; L-tryptophan from chorismate: step 1/5. In terms of biological role, part of a heterotetrameric complex that catalyzes the two-step biosynthesis of anthranilate, an intermediate in the biosynthesis of L-tryptophan. In the first step, the glutamine-binding beta subunit (TrpG) of anthranilate synthase (AS) provides the glutamine amidotransferase activity which generates ammonia as a substrate that, along with chorismate, is used in the second step, catalyzed by the large alpha subunit of AS (TrpE) to produce anthranilate. In the absence of TrpG, TrpE can synthesize anthranilate directly from chorismate and high concentrations of ammonia. This Buchnera aphidicola subsp. Acyrthosiphon pisum (strain APS) (Acyrthosiphon pisum symbiotic bacterium) protein is Anthranilate synthase component 2 (trpG).